Reading from the N-terminus, the 89-residue chain is Small ribosomal subunit protein uS15 (89 aa).

Belongs to the universal ribosomal protein uS15 family. Part of the 30S ribosomal subunit. Forms a bridge to the 50S subunit in the 70S ribosome, contacting the 23S rRNA.

Its function is as follows. One of the primary rRNA binding proteins, it binds directly to 16S rRNA where it helps nucleate assembly of the platform of the 30S subunit by binding and bridging several RNA helices of the 16S rRNA. Functionally, forms an intersubunit bridge (bridge B4) with the 23S rRNA of the 50S subunit in the ribosome. The chain is Small ribosomal subunit protein uS15 from Staphylococcus epidermidis (strain ATCC 12228 / FDA PCI 1200).